The primary structure comprises 296 residues: Carboxylesterase YbfK (296 aa).

Catalysis depends on charge relay system residues serine 129, glutamate 244, and histidine 273.

This sequence belongs to the AB hydrolase superfamily.

It localises to the cytoplasm. It catalyses the reaction a carboxylic ester + H2O = an alcohol + a carboxylate + H(+). Its function is as follows. Shows carboxylesterase activity in vitro. This Bacillus subtilis (strain 168) protein is Carboxylesterase YbfK (ybfK).